The sequence spans 123 residues: Large ribosomal subunit protein bL12 (123 aa).

It belongs to the bacterial ribosomal protein bL12 family. Homodimer. Part of the ribosomal stalk of the 50S ribosomal subunit. Forms a multimeric L10(L12)X complex, where L10 forms an elongated spine to which 2 to 4 L12 dimers bind in a sequential fashion. Binds GTP-bound translation factors.

Forms part of the ribosomal stalk which helps the ribosome interact with GTP-bound translation factors. Is thus essential for accurate translation. The protein is Large ribosomal subunit protein bL12 of Cytophaga hutchinsonii (strain ATCC 33406 / DSM 1761 / CIP 103989 / NBRC 15051 / NCIMB 9469 / D465).